Reading from the N-terminus, the 533-residue chain is Tyrosine decarboxylase (533 aa).

The interval methionine 1–glutamate 22 is disordered. Pyridoxal 5'-phosphate is bound by residues threonine 281 and asparagine 336. Position 339 is an N6-(pyridoxal phosphate)lysine (lysine 339).

The protein belongs to the group II decarboxylase family. Requires pyridoxal 5'-phosphate as cofactor.

The catalysed reaction is L-tyrosine + H(+) = tyramine + CO2. Functionally, catalyzes the decarboxylation of L-tyrosine to tyramine, which can be converted to the hydroxycinnamic acid amides feruloyltyramine and 4-coumaroyltyramine. Possesses low tryptophan decarboxylase activity. The sequence is that of Tyrosine decarboxylase from Oryza sativa subsp. japonica (Rice).